We begin with the raw amino-acid sequence, 202 residues long: UPF0316 protein SH1041 (202 aa).

3 helical membrane passes run Pro-8–Met-28, Met-40–Met-60, and Ile-66–Ile-86.

This sequence belongs to the UPF0316 family.

Its subcellular location is the cell membrane. This chain is UPF0316 protein SH1041, found in Staphylococcus haemolyticus (strain JCSC1435).